Here is a 213-residue protein sequence, read N- to C-terminus: Urease accessory protein UreG (213 aa).

A GTP-binding site is contributed by 14–21 (GPVGSGKT).

The protein belongs to the SIMIBI class G3E GTPase family. UreG subfamily. Homodimer. UreD, UreF and UreG form a complex that acts as a GTP-hydrolysis-dependent molecular chaperone, activating the urease apoprotein by helping to assemble the nickel containing metallocenter of UreC. The UreE protein probably delivers the nickel.

It is found in the cytoplasm. In terms of biological role, facilitates the functional incorporation of the urease nickel metallocenter. This process requires GTP hydrolysis, probably effectuated by UreG. This chain is Urease accessory protein UreG, found in Mesorhizobium japonicum (strain LMG 29417 / CECT 9101 / MAFF 303099) (Mesorhizobium loti (strain MAFF 303099)).